The primary structure comprises 227 residues: ATP synthase F(0) complex subunit a (227 aa).

6 consecutive transmembrane segments (helical) span residues 14-34 (LLGI…FPTP), 69-89 (WATI…LGLL), 99-119 (LSLN…IGML), 137-157 (LLIP…PLAL), 180-200 (FVLI…LFLL), and 202-222 (ILEV…LSLY).

The protein belongs to the ATPase A chain family. As to quaternary structure, component of the ATP synthase complex composed at least of ATP5F1A/subunit alpha, ATP5F1B/subunit beta, ATP5MC1/subunit c (homooctomer), MT-ATP6/subunit a, MT-ATP8/subunit 8, ATP5ME/subunit e, ATP5MF/subunit f, ATP5MG/subunit g, ATP5MK/subunit k, ATP5MJ/subunit j, ATP5F1C/subunit gamma, ATP5F1D/subunit delta, ATP5F1E/subunit epsilon, ATP5PF/subunit F6, ATP5PB/subunit b, ATP5PD/subunit d, ATP5PO/subunit OSCP. ATP synthase complex consists of a soluble F(1) head domain (subunits alpha(3) and beta(3)) - the catalytic core - and a membrane F(0) domain - the membrane proton channel (subunits c, a, 8, e, f, g, k and j). These two domains are linked by a central stalk (subunits gamma, delta, and epsilon) rotating inside the F1 region and a stationary peripheral stalk (subunits F6, b, d, and OSCP). Interacts with DNAJC30; interaction is direct.

It is found in the mitochondrion inner membrane. It carries out the reaction H(+)(in) = H(+)(out). In terms of biological role, subunit a, of the mitochondrial membrane ATP synthase complex (F(1)F(0) ATP synthase or Complex V) that produces ATP from ADP in the presence of a proton gradient across the membrane which is generated by electron transport complexes of the respiratory chain. ATP synthase complex consist of a soluble F(1) head domain - the catalytic core - and a membrane F(1) domain - the membrane proton channel. These two domains are linked by a central stalk rotating inside the F(1) region and a stationary peripheral stalk. During catalysis, ATP synthesis in the catalytic domain of F(1) is coupled via a rotary mechanism of the central stalk subunits to proton translocation. With the subunit c (ATP5MC1), forms the proton-conducting channel in the F(0) domain, that contains two crucial half-channels (inlet and outlet) that facilitate proton movement from the mitochondrial intermembrane space (IMS) into the matrix. Protons are taken up via the inlet half-channel and released through the outlet half-channel, following a Grotthuss mechanism. The polypeptide is ATP synthase F(0) complex subunit a (Squalus acanthias (Spiny dogfish)).